We begin with the raw amino-acid sequence, 497 residues long: Cytochrome P450 76AD1 (497 aa).

A helical membrane pass occupies residues alanine 4 to phenylalanine 24. Residue cysteine 439 participates in heme binding.

This sequence belongs to the cytochrome P450 family. It depends on heme as a cofactor.

Its subcellular location is the membrane. It functions in the pathway pigment biosynthesis; betalain biosynthesis. Its function is as follows. Converts L-DOPA to cyclo-DOPA in the betalain pathway. Provides the cyclo-DOPA moiety of all red betacyanins. In Beta vulgaris (Sugar beet), this protein is Cytochrome P450 76AD1.